Reading from the N-terminus, the 231-residue chain is Ribonuclease 3 (231 aa).

An RNase III domain is found at 8–135 (VGDLERRIGH…LMAALYQDGG (128 aa)). Residue E48 participates in Mg(2+) binding. Residues D52 and E124 contribute to the active site. E124 is a Mg(2+) binding site. The DRBM domain occupies 161-230 (DPKTALQEWA…AKALLEREGA (70 aa)). The disordered stretch occupies residues 210–231 (GKSRQEAEKAAAKALLEREGAG). Residues 212–231 (SRQEAEKAAAKALLEREGAG) show a composition bias toward basic and acidic residues.

This sequence belongs to the ribonuclease III family. In terms of assembly, homodimer. Mg(2+) serves as cofactor.

It localises to the cytoplasm. The catalysed reaction is Endonucleolytic cleavage to 5'-phosphomonoester.. Its function is as follows. Digests double-stranded RNA. Involved in the processing of primary rRNA transcript to yield the immediate precursors to the large and small rRNAs (23S and 16S). Processes some mRNAs, and tRNAs when they are encoded in the rRNA operon. Processes pre-crRNA and tracrRNA of type II CRISPR loci if present in the organism. The polypeptide is Ribonuclease 3 (Caulobacter vibrioides (strain ATCC 19089 / CIP 103742 / CB 15) (Caulobacter crescentus)).